The following is a 497-amino-acid chain: uncharacterized protein (497 aa).

ABC transporter domains follow at residues 9–247 (VSVR…MGQA) and 256–496 (ARPA…TGMA). 41–48 (GGNGAGKS) serves as a coordination point for ATP.

The protein belongs to the ABC transporter superfamily. Ribose importer (TC 3.A.1.2.1) family.

It localises to the cell membrane. Its function is as follows. Probably part of the binding-protein-dependent transport system y4mIJK. This system probably transports a sugar. Probably responsible for energy coupling to the transport system. This is an uncharacterized protein from Sinorhizobium fredii (strain NBRC 101917 / NGR234).